Consider the following 150-residue polypeptide: MQIILLEKIGGLGNLGDIVTVKNGYARNFLIPAGKAKRATEANMKEFEVRRAELEAKQAEILADARVRQEKLDGQTVTVAQKAGVDGRLFGSVTNADIAAAIVAAGIEAVKANVRLPNGPLKAVGEYEVEVALHTDAVAKITVAVVAATE.

Belongs to the bacterial ribosomal protein bL9 family.

Binds to the 23S rRNA. The protein is Large ribosomal subunit protein bL9 of Neisseria meningitidis serogroup C / serotype 2a (strain ATCC 700532 / DSM 15464 / FAM18).